Reading from the N-terminus, the 1303-residue chain is Serine/threonine-protein kinase ULK4 (1303 aa).

The 277-residue stretch at 4–280 (FVLYEEIGRG…WEGVLQHPFW (277 aa)) folds into the Protein kinase domain. Residue Asp121 is the Proton acceptor of the active site. Disordered stretches follow at residues 304–332 (ECSG…AHRL) and 369–401 (TSAM…GHLS). Residues 384 to 400 (SSPQKTSPLSKMTSGHL) show a composition bias toward polar residues. HEAT repeat units lie at residues 504-543 (RLLH…HTTE), 727-765 (LIQE…HNRD), 796-834 (NEYL…RKHP), 926-964 (STVM…LLVS), 1025-1063 (LVEE…NLVA), 1105-1143 (STLL…DTQA), and 1151-1189 (SKPL…LYGG).

Belongs to the protein kinase superfamily. Ser/Thr protein kinase family. APG1/unc-51/ULK1 subfamily. Expressed in embryonic and adult brain. In the brain, widely expressed, with highest levels in layers II/III and V of the cortex, piriform cortex, CA1-3 of hippocampus, dentate gyrus, ependymal cells lining the ventricles and choroid plexus, and in the thalamic reticular nucleus (at protein level).

It carries out the reaction L-seryl-[protein] + ATP = O-phospho-L-seryl-[protein] + ADP + H(+). The catalysed reaction is L-threonyl-[protein] + ATP = O-phospho-L-threonyl-[protein] + ADP + H(+). May be involved in the remodeling of cytoskeletal components, such as alpha-tubulin, and in this way regulates neurite branching and elongation, as well as cell motility. The protein is Serine/threonine-protein kinase ULK4 (Ulk4) of Mus musculus (Mouse).